A 93-amino-acid polypeptide reads, in one-letter code: Serine rich endogenous peptide 6 (93 aa).

Residues methionine 1–serine 27 form the signal peptide. 2 consecutive short sequence motifs (SCOOP motif) follow at residues glycine 48 to isoleucine 62 and isoleucine 73 to arginine 87. Residues glycine 52–glycine 93 form a disordered region. Residues serine 53–tyrosine 66 show a composition bias toward polar residues. 2 short sequence motifs (sxS motif essential for MIK2 binding) span residues serine 54 to serine 56 and serine 79 to serine 81.

This sequence belongs to the serine rich endogenous peptide (SCOOP) phytocytokine family. As to quaternary structure, interacts with MIK2 (via extracellular leucine-rich repeat domain); this interaction triggers the formation of complex between MIK2 and the BAK1/SERK3 and SERK4 coreceptors, and subsequent BAK1 activation by phosphorylation. In terms of tissue distribution, mostly expressed in seedlings shoots, and, to a lower extent, in roots.

It localises to the cell membrane. It is found in the secreted. The protein localises to the extracellular space. The protein resides in the apoplast. Its function is as follows. Brassicaceae-specific phytocytokine (plant endogenous peptide released into the apoplast) perceived by MIK2 in a BAK1/SERK3 and SERK4 coreceptors-dependent manner, that modulates various physiological and antimicrobial processes including growth prevention and reactive oxygen species (ROS) response regulation. Inhibits root growth. This Arabidopsis thaliana (Mouse-ear cress) protein is Serine rich endogenous peptide 6.